The primary structure comprises 310 residues: Isoaspartyl peptidase/L-asparaginase (310 aa).

Thr-167 functions as the Nucleophile in the catalytic mechanism. Substrate-binding positions include 195–198 (RVGD) and 218–221 (TGHG).

The protein belongs to the Ntn-hydrolase family. In terms of assembly, heterodimer of an alpha and beta chain produced by autocleavage. Cleaved into an alpha and beta chain by autocatalysis; this activates the enzyme. The N-terminal residue of the beta subunit is responsible for the nucleophile hydrolase activity.

The protein localises to the cytoplasm. It catalyses the reaction L-asparagine + H2O = L-aspartate + NH4(+). The catalysed reaction is Cleavage of a beta-linked Asp residue from the N-terminus of a polypeptide.. In terms of biological role, has both L-asparaginase and beta-aspartyl peptidase activity. Does not have aspartylglucosaminidase activity and is inactive toward GlcNAc-L-Asn. Likewise, has no activity toward glutamine. The polypeptide is Isoaspartyl peptidase/L-asparaginase (asrgl1) (Danio rerio (Zebrafish)).